The chain runs to 325 residues: Ribonucleoside-diphosphate reductase small chain (325 aa).

Fe cation is bound by residues aspartate 76, glutamate 107, and histidine 110. Tyrosine 114 is an active-site residue. 3 residues coordinate Fe cation: glutamate 170, glutamate 204, and histidine 207.

This sequence belongs to the ribonucleoside diphosphate reductase small chain family. In terms of assembly, heterodimer of a large and a small subunit. It depends on Fe cation as a cofactor.

It carries out the reaction a 2'-deoxyribonucleoside 5'-diphosphate + [thioredoxin]-disulfide + H2O = a ribonucleoside 5'-diphosphate + [thioredoxin]-dithiol. Its function is as follows. Provides the precursors necessary for DNA synthesis. Catalyzes the biosynthesis of deoxyribonucleotides from the corresponding ribonucleotides. This Encephalitozoon cuniculi (strain GB-M1) (Microsporidian parasite) protein is Ribonucleoside-diphosphate reductase small chain.